Consider the following 332-residue polypeptide: Glycerol-3-phosphate dehydrogenase [NAD(P)+] (332 aa).

NADPH-binding residues include Ser11, Trp12, Arg32, Arg33, and Lys106. Sn-glycerol 3-phosphate is bound by residues Lys106 and Gly136. Ala140 lines the NADPH pocket. The sn-glycerol 3-phosphate site is built by Lys191, Asp244, Ser254, Arg255, and Asn256. Lys191 functions as the Proton acceptor in the catalytic mechanism. Arg255 is an NADPH binding site. NADPH-binding residues include Val280 and Glu282.

The protein belongs to the NAD-dependent glycerol-3-phosphate dehydrogenase family.

The protein resides in the cytoplasm. The catalysed reaction is sn-glycerol 3-phosphate + NAD(+) = dihydroxyacetone phosphate + NADH + H(+). It carries out the reaction sn-glycerol 3-phosphate + NADP(+) = dihydroxyacetone phosphate + NADPH + H(+). Its pathway is membrane lipid metabolism; glycerophospholipid metabolism. Catalyzes the reduction of the glycolytic intermediate dihydroxyacetone phosphate (DHAP) to sn-glycerol 3-phosphate (G3P), the key precursor for phospholipid synthesis. The polypeptide is Glycerol-3-phosphate dehydrogenase [NAD(P)+] (Corynebacterium urealyticum (strain ATCC 43042 / DSM 7109)).